Reading from the N-terminus, the 497-residue chain is FAD-linked oxidoreductase fogF (497 aa).

A signal peptide spans 1 to 18; sequence MRRNILTALACSWLTAHA. The FAD-binding PCMH-type domain occupies 59-229; that stretch reads NAPTYAGAIS…TSATYKLHKL (171 aa).

This sequence belongs to the oxygen-dependent FAD-linked oxidoreductase family. FAD serves as cofactor.

The protein operates within secondary metabolite biosynthesis. Its function is as follows. FAD-linked oxidoreductase; part of the gene cluster that mediates the biosynthesis of flavoglaucin and congeners (including aspergin, dihydroauroglaucin and auroglaucin), prenylated salicylaldehyde derivatives carrying a saturated or an unsaturated C-7 side chain. The PKS fogA releases the carboxylic acid (8E,10E,12E)-3,5,7-trihydroxytetradeca-8,10,12-trienoic acid as its product, as well as derivatives with one and two double bonds. FogA is indeed able to reduce the initial triketide, thus being at least partially responsible for the differently saturated heptyl side chains of flavoglaucin congeners. The oxidoreductases fogB, fogC and fogD modify the nascent polyketide in fogA-bound form and, together, fogA, fogB, fogC and fogD are necessary for the formation of the aromatic core and the cyclized PKS products are released as salicyl alcohols. In particular, fogB is responsible for oxidation of a hydroxyl group or reduction of remaining double bond(s) at the C-7 residue whereas fogD is probably involved in the reductive release of the modified PKS products. The cytochrome P450 monooxygenase fogE is then responsible for the hydroxylation at C-3 of the benzene ring. The fogE products are substrates of the prenyltransferase fogH and the prenylated benzyl alcohols are subsequently oxidized by the fogF to produce the final aryl aldehydes flavoglaucin and congeners. The short-chain dehydrogenase fogG does not seem to be involved in the biosynthesis of the prenylated salicylaldehyde derivatives. The protein is FAD-linked oxidoreductase fogF of Aspergillus ruber (strain CBS 135680).